The following is a 429-amino-acid chain: 3-phosphoshikimate 1-carboxyvinyltransferase (429 aa).

Residues lysine 25, serine 26, and arginine 30 each coordinate 3-phosphoshikimate. Position 25 (lysine 25) interacts with phosphoenolpyruvate. Positions 99 and 127 each coordinate phosphoenolpyruvate. Positions 173, 174, 175, 201, 317, 340, and 344 each coordinate 3-phosphoshikimate. Glutamine 175 serves as a coordination point for phosphoenolpyruvate. Aspartate 317 functions as the Proton acceptor in the catalytic mechanism. Arginine 348, arginine 390, and lysine 415 together coordinate phosphoenolpyruvate.

The protein belongs to the EPSP synthase family. In terms of assembly, monomer.

The protein resides in the cytoplasm. It carries out the reaction 3-phosphoshikimate + phosphoenolpyruvate = 5-O-(1-carboxyvinyl)-3-phosphoshikimate + phosphate. It participates in metabolic intermediate biosynthesis; chorismate biosynthesis; chorismate from D-erythrose 4-phosphate and phosphoenolpyruvate: step 6/7. In terms of biological role, catalyzes the transfer of the enolpyruvyl moiety of phosphoenolpyruvate (PEP) to the 5-hydroxyl of shikimate-3-phosphate (S3P) to produce enolpyruvyl shikimate-3-phosphate and inorganic phosphate. This Pseudoalteromonas atlantica (strain T6c / ATCC BAA-1087) protein is 3-phosphoshikimate 1-carboxyvinyltransferase.